The primary structure comprises 150 residues: Probable antibacterial peptide (150 aa).

An N-terminal signal peptide occupies residues 1 to 19 (MHIARFCLLSSMAVLALSA).

The protein resides in the secreted. Has antibacterial activity in vitro. The protein is Probable antibacterial peptide of Riptortus clavatus (Bean bug).